The sequence spans 74 residues: Veswaprin-a (74 aa).

Residues M1–G24 form the signal peptide. The 45-residue stretch at R27–I71 folds into the WAP domain. 4 disulfides stabilise this stretch: C34–C59, C42–C63, C46–C58, and C52–C67.

Belongs to the venom waprin family. Expressed by the venom gland.

Its subcellular location is the secreted. Functionally, damages membranes of susceptible bacteria. Has no hemolytic activity. Not toxic to mice. Does not inhibit the proteinases elastase and cathepsin G. The polypeptide is Veswaprin-a (Demansia vestigiata (Lesser black whip snake)).